The sequence spans 499 residues: Aspartyl/glutamyl-tRNA(Asn/Gln) amidotransferase subunit B (499 aa).

It belongs to the GatB/GatE family. GatB subfamily. Heterotrimer of A, B and C subunits.

The catalysed reaction is L-glutamyl-tRNA(Gln) + L-glutamine + ATP + H2O = L-glutaminyl-tRNA(Gln) + L-glutamate + ADP + phosphate + H(+). The enzyme catalyses L-aspartyl-tRNA(Asn) + L-glutamine + ATP + H2O = L-asparaginyl-tRNA(Asn) + L-glutamate + ADP + phosphate + 2 H(+). Its function is as follows. Allows the formation of correctly charged Asn-tRNA(Asn) or Gln-tRNA(Gln) through the transamidation of misacylated Asp-tRNA(Asn) or Glu-tRNA(Gln) in organisms which lack either or both of asparaginyl-tRNA or glutaminyl-tRNA synthetases. The reaction takes place in the presence of glutamine and ATP through an activated phospho-Asp-tRNA(Asn) or phospho-Glu-tRNA(Gln). The sequence is that of Aspartyl/glutamyl-tRNA(Asn/Gln) amidotransferase subunit B from Bartonella quintana (strain Toulouse) (Rochalimaea quintana).